The primary structure comprises 82 residues: Protein Rv1078A (82 aa).

Over residues 35–54 the composition is skewed to basic residues; sequence GGPTRRLRRRPAVTRRRRPD. The tract at residues 35–82 is disordered; that stretch reads GGPTRRLRRRPAVTRRRRPDRRFVRCRPSPTRRGLPGCWRHSSTGPHT.

The protein resides in the cytoplasm. This is Protein Rv1078A from Mycobacterium tuberculosis (strain ATCC 25618 / H37Rv).